A 357-amino-acid polypeptide reads, in one-letter code: Chorismate synthase (357 aa).

The span at 38–49 (EKDIQPDLDRRK) shows a compositional bias: basic and acidic residues. Positions 38 to 60 (EKDIQPDLDRRKPGTSRYTTPRR) are disordered. Residues arginine 48 and arginine 54 each coordinate NADP(+). Residues 125–127 (RSS), 243–244 (NA), glycine 283, 298–302 (KPTSS), and arginine 324 contribute to the FMN site.

Belongs to the chorismate synthase family. In terms of assembly, homotetramer. The cofactor is FMNH2.

It catalyses the reaction 5-O-(1-carboxyvinyl)-3-phosphoshikimate = chorismate + phosphate. The protein operates within metabolic intermediate biosynthesis; chorismate biosynthesis; chorismate from D-erythrose 4-phosphate and phosphoenolpyruvate: step 7/7. Functionally, catalyzes the anti-1,4-elimination of the C-3 phosphate and the C-6 proR hydrogen from 5-enolpyruvylshikimate-3-phosphate (EPSP) to yield chorismate, which is the branch point compound that serves as the starting substrate for the three terminal pathways of aromatic amino acid biosynthesis. This reaction introduces a second double bond into the aromatic ring system. The polypeptide is Chorismate synthase (Haemophilus influenzae (strain PittGG)).